Here is a 326-residue protein sequence, read N- to C-terminus: Histone-lysine N-methyltransferase Suv4-20 (326 aa).

The SET domain maps to 163–273 (QECTRYSLEG…AGDEITCFYG (111 aa)). A disordered region spans residues 294–313 (RGKFSTSDEEENDEPSALSE).

It belongs to the class V-like SAM-binding methyltransferase superfamily. Histone-lysine methyltransferase family. Suvar4-20 subfamily.

It localises to the nucleus. The protein resides in the chromosome. The enzyme catalyses N(6)-methyl-L-lysyl(20)-[histone H4] + S-adenosyl-L-methionine = N(6),N(6)-dimethyl-L-lysyl(20)-[histone H4] + S-adenosyl-L-homocysteine + H(+). It carries out the reaction N(6),N(6)-dimethyl-L-lysyl(20)-[histone H4] + S-adenosyl-L-methionine = N(6),N(6),N(6)-trimethyl-L-lysyl(20)-[histone H4] + S-adenosyl-L-homocysteine + H(+). Histone methyltransferase that specifically di- and trimethylates 'Lys-20' of histone H4 (H4K20me2/me3). H4 'Lys-20' trimethylation represents a specific tag for epigenetic transcriptional repression. Contributes to dosage compensation of X chromosome-relative to autosome-linked gene expression, possibly by converting H4K20me1 to H4K20m2/me3 on autosomes. Involved in the regulation of growth and body fat metabolism downstream of the TOR complex 2 pathway. This chain is Histone-lysine N-methyltransferase Suv4-20, found in Caenorhabditis briggsae.